Consider the following 25-residue polypeptide: Cruzioseptin-13 (25 aa).

Asparagine amide is present on Asn25.

In terms of tissue distribution, expressed by the skin glands.

It localises to the secreted. Functionally, has antimicrobial activity. The protein is Cruzioseptin-13 of Cruziohyla calcarifer (Splendid leaf frog).